We begin with the raw amino-acid sequence, 535 residues long: GMP synthase [glutamine-hydrolyzing] (535 aa).

One can recognise a Glutamine amidotransferase type-1 domain in the interval 24–217 (KILIVDFGSQ…VRNISGLGGD (194 aa)). Cys-101 functions as the Nucleophile in the catalytic mechanism. Catalysis depends on residues His-191 and Glu-193. A GMPS ATP-PPase domain is found at 218–410 (WTMHAFREEE…LGLPDVFVGR (193 aa)). 245 to 251 (SGGVDSA) is an ATP binding site.

In terms of assembly, homodimer.

It carries out the reaction XMP + L-glutamine + ATP + H2O = GMP + L-glutamate + AMP + diphosphate + 2 H(+). Its pathway is purine metabolism; GMP biosynthesis; GMP from XMP (L-Gln route): step 1/1. Functionally, catalyzes the synthesis of GMP from XMP. This chain is GMP synthase [glutamine-hydrolyzing], found in Bradyrhizobium sp. (strain ORS 278).